The chain runs to 178 residues: Fatty-acid and retinol-binding protein 1 (178 aa).

Residues 1–16 form the signal peptide; the sequence is MYHQLILMALIGVIMA. 2 N-linked (GlcNAc...) asparagine glycosylation sites follow: Asn-44 and Asn-75. Coiled coils occupy residues 67 to 89 and 123 to 153; these read DAAL…ELRN and KLDV…ELKA. Asn-157 is a glycosylation site (N-linked (GlcNAc...) asparagine).

Belongs to the fatty-acid and retinol-binding protein (FARBP) family. Post-translationally, N-glycosylated.

It is found in the secreted. Its function is as follows. Binds retinol and different fatty acids. In Acanthocheilonema viteae (Filarial nematode worm), this protein is Fatty-acid and retinol-binding protein 1.